The following is a 311-amino-acid chain: Transmembrane protein DDB_G0273707/DDB_G0273361 (311 aa).

The tract at residues 1 to 113 (MNEIEVDNLS…NNNNNKNENN (113 aa)) is disordered. Asn-8 carries an N-linked (GlcNAc...) asparagine glycan. Over residues 9–18 (LSHTNKNVAT) the composition is skewed to polar residues. N-linked (GlcNAc...) asparagine glycosylation is found at Asn-35, Asn-38, Asn-62, and Asn-76. 2 stretches are compositionally biased toward low complexity: residues 37–67 (SNNSNNNNNNNNNNNNNNNNNNNNNNNSNSN) and 76–111 (NNSNNNNNNNNNNNNNNNNNNNNNNNNNNNNNNKNE). A coiled-coil region spans residues 95 to 124 (NNNNNNNNNNNNNNKNENNNKIKNEKINIL). 5 consecutive transmembrane segments (helical) span residues 150 to 170 (LEEIGWSWLSSFIGILVLALL), 181 to 201 (IFLLGSFAASAVLIFGAPKSP), 208 to 228 (LVLGHIVSATVGSIIRVALVY), 235 to 255 (VACALAVSLAIVGMHFTKSIH), and 276 to 296 (FYYIFVPVASGSLTMLLTALI).

It localises to the membrane. This Dictyostelium discoideum (Social amoeba) protein is Transmembrane protein DDB_G0273707/DDB_G0273361.